Reading from the N-terminus, the 103-residue chain is uncharacterized protein (103 aa).

The interval 69–103 is disordered; sequence SSISYPGGGGGGGGSAKSLSSSKPGGGGGSPLIFL. Gly residues-rich tracts occupy residues 74 to 83 and 92 to 103; these read PGGGGGGGGS and PGGGGGSPLIFL.

This is an uncharacterized protein from Saccharomyces cerevisiae (strain ATCC 204508 / S288c) (Baker's yeast).